The chain runs to 260 residues: MGRFPSWVLVADWPAPPGVMVLSTLRGGPGVSVAPFDRLNLGNCSGVAGDAPVCVERNRSRLVEMLGLPSVPHWLRQVHGVEVLRVDALLQSIARVVEPTADAAVTSVVGAVLAILTADCLPVVLAAVDGSEIGVVHAGWRGLADDVLGRTVAALRTSPEYLQAWLGPAAGPQAYEVGVDVYAAFVERDSGAACAFSVTRPGHWYVDLYALARQRLMRAGLSAVSIYGGGLCTISDPQRFFSHRRDRRSGRFATLAWIGC.

The Zn(2+) site is built by His-79, Cys-120, and His-137.

The protein belongs to the purine nucleoside phosphorylase YfiH/LACC1 family. In terms of assembly, homodimer. The cofactor is Cu(2+). Zn(2+) is required as a cofactor.

The enzyme catalyses adenosine + phosphate = alpha-D-ribose 1-phosphate + adenine. It catalyses the reaction S-methyl-5'-thioadenosine + phosphate = 5-(methylsulfanyl)-alpha-D-ribose 1-phosphate + adenine. It carries out the reaction inosine + phosphate = alpha-D-ribose 1-phosphate + hypoxanthine. The catalysed reaction is adenosine + H2O + H(+) = inosine + NH4(+). Purine nucleoside enzyme that catalyzes the phosphorolysis of adenosine and inosine nucleosides, yielding D-ribose 1-phosphate and the respective free bases, adenine and hypoxanthine. Also catalyzes the phosphorolysis of S-methyl-5'-thioadenosine into adenine and S-methyl-5-thio-alpha-D-ribose 1-phosphate. Also has adenosine deaminase activity. The chain is Purine nucleoside phosphorylase XF_0940 from Xylella fastidiosa (strain 9a5c).